We begin with the raw amino-acid sequence, 673 residues long: UvrABC system protein B (673 aa).

The Helicase ATP-binding domain occupies 26–415; sequence EGLEDGLAHQ…GDVVDQVVRP (390 aa). 39 to 46 contributes to the ATP binding site; the sequence is GVTGSGKT. The short motif at 92 to 115 is the Beta-hairpin element; the sequence is YYDYYQPEAYVPSSDTFIEKDASV. In terms of domain architecture, Helicase C-terminal spans 431–597; sequence QVDDLLSEIR…GLNKKVVDIL (167 aa). The interval 608–627 is disordered; the sequence is AKGRGKSRPIVEPDNVPMDM. A UVR domain is found at 633-668; that stretch reads QQKIHELEGLMMQHAQNLEFEEAAQIRDQLHQLREL.

It belongs to the UvrB family. As to quaternary structure, forms a heterotetramer with UvrA during the search for lesions. Interacts with UvrC in an incision complex.

The protein localises to the cytoplasm. Its function is as follows. The UvrABC repair system catalyzes the recognition and processing of DNA lesions. A damage recognition complex composed of 2 UvrA and 2 UvrB subunits scans DNA for abnormalities. Upon binding of the UvrA(2)B(2) complex to a putative damaged site, the DNA wraps around one UvrB monomer. DNA wrap is dependent on ATP binding by UvrB and probably causes local melting of the DNA helix, facilitating insertion of UvrB beta-hairpin between the DNA strands. Then UvrB probes one DNA strand for the presence of a lesion. If a lesion is found the UvrA subunits dissociate and the UvrB-DNA preincision complex is formed. This complex is subsequently bound by UvrC and the second UvrB is released. If no lesion is found, the DNA wraps around the other UvrB subunit that will check the other stand for damage. This is UvrABC system protein B from Escherichia coli O6:H1 (strain CFT073 / ATCC 700928 / UPEC).